The primary structure comprises 154 residues: 6,7-dimethyl-8-ribityllumazine synthase (154 aa).

5-amino-6-(D-ribitylamino)uracil is bound by residues Phe-22, 56-58, and 80-82; these read AFE and AVI. 85-86 contributes to the (2S)-2-hydroxy-3-oxobutyl phosphate binding site; that stretch reads AT. Residue His-88 is the Proton donor of the active site. Phe-113 is a 5-amino-6-(D-ribitylamino)uracil binding site. Arg-127 is a binding site for (2S)-2-hydroxy-3-oxobutyl phosphate.

Belongs to the DMRL synthase family.

It catalyses the reaction (2S)-2-hydroxy-3-oxobutyl phosphate + 5-amino-6-(D-ribitylamino)uracil = 6,7-dimethyl-8-(1-D-ribityl)lumazine + phosphate + 2 H2O + H(+). It participates in cofactor biosynthesis; riboflavin biosynthesis; riboflavin from 2-hydroxy-3-oxobutyl phosphate and 5-amino-6-(D-ribitylamino)uracil: step 1/2. Its function is as follows. Catalyzes the formation of 6,7-dimethyl-8-ribityllumazine by condensation of 5-amino-6-(D-ribitylamino)uracil with 3,4-dihydroxy-2-butanone 4-phosphate. This is the penultimate step in the biosynthesis of riboflavin. The polypeptide is 6,7-dimethyl-8-ribityllumazine synthase (Agathobacter rectalis (strain ATCC 33656 / DSM 3377 / JCM 17463 / KCTC 5835 / VPI 0990) (Eubacterium rectale)).